The primary structure comprises 190 residues: Heme-binding protein 1 (190 aa).

The protein belongs to the HEBP family. As to quaternary structure, monomer.

The protein localises to the cytoplasm. In terms of biological role, may bind free porphyrinogens that may be present in the cell and thus facilitate removal of these potentially toxic compound. Binds with a high affinity to one molecule of heme or porphyrins. It binds metalloporphyrins, free porphyrins and N-methylprotoporphyrin with similar affinities. The protein is Heme-binding protein 1 (hebp1) of Xenopus laevis (African clawed frog).